Reading from the N-terminus, the 351-residue chain is ATP-dependent 6-phosphofructokinase subunit gamma (351 aa).

Heterododecamer of 4 alpha, 4 beta and 4 gamma chains. The gamma chain bridges the N-terminal halves of the alpha and beta subunits.

The protein localises to the cytoplasm. It functions in the pathway carbohydrate degradation; glycolysis; D-glyceraldehyde 3-phosphate and glycerone phosphate from D-glucose: step 3/4. Functionally, structural subunit of pyrophosphate--fructose 6-phosphate 1-phosphotransferase. Not required for catalytic activity. Fine-tunes allosteric regulation of the ATP-PFK by ATP, fructose 2,6-bisphosphate and AMP. This is ATP-dependent 6-phosphofructokinase subunit gamma (PFK3) from Komagataella pastoris (Yeast).